Consider the following 224-residue polypeptide: Urease accessory protein UreF (224 aa).

Belongs to the UreF family. In terms of assembly, ureD, UreF and UreG form a complex that acts as a GTP-hydrolysis-dependent molecular chaperone, activating the urease apoprotein by helping to assemble the nickel containing metallocenter of UreC. The UreE protein probably delivers the nickel.

It localises to the cytoplasm. Its function is as follows. Required for maturation of urease via the functional incorporation of the urease nickel metallocenter. The protein is Urease accessory protein UreF of Pseudomonas fluorescens (strain Pf0-1).